Here is a 540-residue protein sequence, read N- to C-terminus: Medium/long-chain-fatty-acid--[acyl-carrier-protein] ligase FadD10 (540 aa).

Residue T177 participates in Mg(2+) binding. I226, V316, and S320 together coordinate ATP. E321 is a Mg(2+) binding site. Residue D408 participates in ATP binding.

Belongs to the ATP-dependent AMP-binding enzyme family. As to quaternary structure, homodimer. Mg(2+) is required as a cofactor.

The protein resides in the cytoplasm. It carries out the reaction a medium-chain fatty acid + holo-[ACP] + ATP = a medium-chain fatty acyl-[ACP] + AMP + diphosphate. It catalyses the reaction a medium-chain fatty acid + ATP + H(+) = a medium-chain fatty acyl-AMP + diphosphate. The enzyme catalyses a medium-chain fatty acyl-AMP + holo-[ACP] = a medium-chain fatty acyl-[ACP] + AMP + H(+). The catalysed reaction is a long-chain fatty acid + holo-[ACP] + ATP = a long-chain fatty acyl-[ACP] + AMP + diphosphate. It carries out the reaction a long-chain fatty acid + ATP + H(+) = a long-chain fatty acyl-AMP + diphosphate. It catalyses the reaction a long-chain fatty acyl-AMP + holo-[ACP] = a long-chain fatty acyl-[ACP] + AMP + H(+). The enzyme catalyses a (2E)-enoyl fatty acid + holo-[ACP] + ATP = a (2E)-enoyl-[ACP] + AMP + diphosphate. The catalysed reaction is a (2E)-enoyl fatty acid + ATP + H(+) = a (2E)-2-fatty-enoyl-AMP + diphosphate. It carries out the reaction a (2E)-2-fatty-enoyl-AMP + holo-[ACP] = a (2E)-enoyl-[ACP] + AMP + H(+). It catalyses the reaction a (3R)-3-isocyanyl-fatty acid + holo-[ACP] + ATP = a (3R)-3-isocyanyl-fatty acyl-[ACP] + AMP + diphosphate. The enzyme catalyses a (3R)-3-isocyanyl-fatty acid + ATP + H(+) = a (3R)-3-isocyanyl-fatty acyl-AMP + diphosphate. The catalysed reaction is a (3R)-3-isocyanyl-fatty acyl-AMP + holo-[ACP] = a (3R)-3-isocyanyl-fatty acyl-[ACP] + AMP + H(+). It participates in lipid metabolism; fatty acid metabolism. In terms of biological role, acyl:acyl-carrier protein ligase involved in the biosynthesis of a unique class of isonitrile lipopeptides (INLPs) that seem to function as virulence factors in M.tuberculosis and to play a role in metal acquisition. Catalyzes the activation of medium/long-chain fatty acids as acyl-adenylates (acyl-AMP), which are then transferred to the phosphopantetheine arm of the acyl-carrier protein (ACP) MT0109. Acts twice during the INLP pathway, catalyzing the activation of a (2E)-enoyl fatty acid as well as the corresponding (3R)-3-isocyanyl-fatty acid as acyl-adenylates (acyl-AMP), and then the acyl transfer to the dedicated acyl-carrier protein MT0109. The protein is Medium/long-chain-fatty-acid--[acyl-carrier-protein] ligase FadD10 (fadD10) of Mycobacterium tuberculosis (strain CDC 1551 / Oshkosh).